Reading from the N-terminus, the 195-residue chain is O-methyltransferase (195 aa).

The protein belongs to the methyltransferase superfamily.

The protein operates within secondary metabolite biosynthesis. Functionally, O-methyltransferase; part of the gene cluster that mediates the biosynthesis of pyrophen and campyrone B, which represent a class of fungal amino acid-derived alpha-pyrone natural products. The first step of pyrophen biosynthesis is catalyzed by the PKS-NRPS hybrid synthetase ATPKS that uptakes and condensates L-phenylalanine and malonyl-CoA in order to produce desmethyldesacetylpyrophen. Although the A domain does not discriminate between 2 enantiomeric phenylalanines, the downstream KS domain must play a gate keeping role to stereoselectively accept the L-phenylalanyl-S-phosphopantetheine (Ppant)-T domain intermediate for chain elongation. The resulting amino acid derived diketide is off-loaded through lactonization to yield the alpha-pyrone intermediate desmethyldesacetylpyrophen. The cluster-specific O-methyltransferase (OMT) then methylates desmethyldesacetylpyrophen to desacetylpyrophen, which is further acetylated to pyrophen by an endogenous yet unidentified N-acetyltransferase. ATPKS has relaxed substrate specificity to activate and extend branched-chain amino acid L-leucine to produce small amounts of campyrone B. In Aspergillus niger (strain ATCC 1015 / CBS 113.46 / FGSC A1144 / LSHB Ac4 / NCTC 3858a / NRRL 328 / USDA 3528.7), this protein is O-methyltransferase.